A 292-amino-acid polypeptide reads, in one-letter code: Protein PHR1-LIKE 3 (292 aa).

The HTH myb-type domain occupies 34 to 94; that stretch reads TDPKPRLRWT…HLQKFRLGRQ (61 aa). The segment at residues 65-90 is a DNA-binding region (H-T-H motif); sequence PKTIMRTMGVKGLTLYHLKSHLQKFR. Positions 137–157 form a coiled coil; that stretch reads TEALRAQMEVQRRLHEQLEVQ. An LHEQLE motif is present at residues 150 to 155; it reads LHEQLE.

The protein belongs to the MYB-CC family. In terms of assembly, homo- and heterodimers. Interacts with PHL2, but not with PHR1.

Its subcellular location is the nucleus. In terms of biological role, transcriptional activator. Probable component of the central regulatory system controlling transcriptional responses to Pi starvation. Binds in a sequence-specific manner to phosphate starvation-regulated promoters. Required for female gametophyte development and function. In Arabidopsis thaliana (Mouse-ear cress), this protein is Protein PHR1-LIKE 3.